The following is a 371-amino-acid chain: Aminomethyltransferase (371 aa).

It belongs to the GcvT family. The glycine cleavage system is composed of four proteins: P, T, L and H.

The catalysed reaction is N(6)-[(R)-S(8)-aminomethyldihydrolipoyl]-L-lysyl-[protein] + (6S)-5,6,7,8-tetrahydrofolate = N(6)-[(R)-dihydrolipoyl]-L-lysyl-[protein] + (6R)-5,10-methylene-5,6,7,8-tetrahydrofolate + NH4(+). The glycine cleavage system catalyzes the degradation of glycine. This chain is Aminomethyltransferase, found in Pectobacterium atrosepticum (strain SCRI 1043 / ATCC BAA-672) (Erwinia carotovora subsp. atroseptica).